The chain runs to 192 residues: UPF0312 protein Ent638_1570 (192 aa).

Positions 1 to 22 (MKKRLLGIALGSLLFTTGSAVA) are cleaved as a signal peptide.

Belongs to the UPF0312 family. Type 1 subfamily.

It is found in the periplasm. The chain is UPF0312 protein Ent638_1570 from Enterobacter sp. (strain 638).